The primary structure comprises 640 residues: ETV5-related protein Ets96B (640 aa).

Residues 315 to 375 (HADSTTTAAQ…HHGHQQAEQQ (61 aa)) form a disordered region. Residues 321–356 (TAAQQQQQQQEQQQQQQQQQQQQQHQQQLQQAAALH) adopt a coiled-coil conformation. A compositionally biased stretch (low complexity) spans 322 to 355 (AAQQQQQQQEQQQQQQQQQQQQQHQQQLQQAAAL). Over residues 356 to 369 (HPHHHHSHHGHHGH) the composition is skewed to basic residues. Residues 498-579 (LQLWQFLVAL…NGERYVYRFV (82 aa)) constitute a DNA-binding region (ETS). The segment covering 609-624 (LAKTPPTSGDSQTQSP) has biased composition (polar residues). The segment at 609-628 (LAKTPPTSGDSQTQSPRVAK) is disordered.

The protein belongs to the ETS family. As to expression, in the adult brain, expressed almost exclusively in dopaminergic neurons.

It localises to the nucleus. Functionally, required in dopaminergic neurons to regulate expression of genes involved in dopamine signaling. Decreases expression of the dopamine transporter DAT and increases expression of the dopamine transporter Vmat and the tyrosine 3-monooxygenase ple which is involved in dopamine biosynthesis. Also involved in negatively regulating the expression of a group of endoplasmic reticulum proteins, the molecular chaperone Calr and the protein disulfide isomerases CaBP1 and ERp60. The chain is ETV5-related protein Ets96B from Drosophila melanogaster (Fruit fly).